Here is a 956-residue protein sequence, read N- to C-terminus: F-box only protein 10 (956 aa).

The region spanning 1–48 (MEAGGLPLELWRMILAYLHLPDLGRCSLVCRAWYELILSLDSTRWRQL) is the F-box domain. PbH1 repeat units follow at residues 198-217 (SGHV…QVHG) and 238-260 (VPLC…TVEG). Positions 314 to 367 (EGSQSPTSPASSSPKPGSKAGSQEAEVGSDGERVAQTPDSSDGGLSPSGEDEDE) are disordered. 2 stretches are compositionally biased toward low complexity: residues 316-336 (SQSP…AGSQ) and 351-361 (PDSSDGGLSPS). Phosphoserine occurs at positions 321 and 326. 15 PbH1 repeats span residues 427-448 (VQGC…FVCS), 449-470 (HGRA…RCIH), 471-493 (NSKI…FLRL), 494-516 (EGGG…DIRK), 538-560 (LGNG…GIYI), 561-583 (LYHG…GIAV), 584-606 (NENG…GVDI), 607-629 (RRGG…GVVV), 630-652 (GDEG…GVWM), 653-675 (MSSS…GVAV), 717-739 (RPIT…GLYV), 740-762 (QSSE…GITV), 764-786 (QSSQ…GVKV), 787-809 (EAQC…GIIT), and 832-854 (LPRS…GIAV).

In terms of assembly, component of the SCF(FBXO10) complex consisting of CUL1, SKP1 and FBXO10. Interacts with BCL2. Interacts with PRDM1.

The protein resides in the cytoplasm. It functions in the pathway protein modification; protein ubiquitination. Its function is as follows. Substrate-recognition component of the SCF (SKP1-CUL1-F-box protein)-type E3 ubiquitin ligase complex. Mediates the ubiquitination and degradation of BCL2, an antiapoptotic protein, thereby playing a role in apoptosis by controlling the stability of BCL2. Targets also the receptor for advanced glycation end products RAGE for ubiquitination and subsequent lysosomal degradation. Directly controls HGAL/GCSAM ubiquitination and degradation and thereby decreases BCR signaling. The chain is F-box only protein 10 (FBXO10) from Homo sapiens (Human).